Consider the following 245-residue polypeptide: MIIPALDLIEGQVVRLYQGDYGQVTEYKVDPAEQFNLYHQAGANWLHLVDLTGAKDTTARQLDLIAKLLASTPANIQIGGGVRTEQDVIDLLEAGAQRVVVGSTAVKQPELVKGWMEKYGAEKIVLALDINIYQDGTRKVAISGWQEDSGVTIEALINDYLTVGLQHVLCTDISRDGTLEGSNVELYVDLCKQYPQVQFQSSGGIGSLADIEALKGSGVAGVIVGRALLDGKFTAEEAFACWQSE.

Asp-7 acts as the Proton acceptor in catalysis. Asp-129 acts as the Proton donor in catalysis.

It belongs to the HisA/HisF family.

It is found in the cytoplasm. It carries out the reaction 1-(5-phospho-beta-D-ribosyl)-5-[(5-phospho-beta-D-ribosylamino)methylideneamino]imidazole-4-carboxamide = 5-[(5-phospho-1-deoxy-D-ribulos-1-ylimino)methylamino]-1-(5-phospho-beta-D-ribosyl)imidazole-4-carboxamide. Its pathway is amino-acid biosynthesis; L-histidine biosynthesis; L-histidine from 5-phospho-alpha-D-ribose 1-diphosphate: step 4/9. The protein is 1-(5-phosphoribosyl)-5-[(5-phosphoribosylamino)methylideneamino] imidazole-4-carboxamide isomerase of Vibrio campbellii (strain ATCC BAA-1116).